The sequence spans 87 residues: Small ribosomal subunit protein bS20 (87 aa).

Residues 1 to 11 (MANIKSKKKRI) are compositionally biased toward basic residues. The interval 1-25 (MANIKSKKKRIKTNEKARQRNKAIR) is disordered.

This sequence belongs to the bacterial ribosomal protein bS20 family.

Binds directly to 16S ribosomal RNA. The chain is Small ribosomal subunit protein bS20 from Corynebacterium kroppenstedtii (strain DSM 44385 / JCM 11950 / CIP 105744 / CCUG 35717).